A 118-amino-acid chain; its full sequence is UPF0342 protein BPUM_0928 (118 aa).

Belongs to the UPF0342 family.

The chain is UPF0342 protein BPUM_0928 from Bacillus pumilus (strain SAFR-032).